Consider the following 342-residue polypeptide: Biotin synthase (342 aa).

The 220-residue stretch at 55-274 (NAVQCNQLLN…IALARIMMPK (220 aa)) folds into the Radical SAM core domain. Residues C70, C74, and C77 each contribute to the [4Fe-4S] cluster site. C114, C145, C205, and R278 together coordinate [2Fe-2S] cluster.

This sequence belongs to the radical SAM superfamily. Biotin synthase family. As to quaternary structure, homodimer. It depends on [4Fe-4S] cluster as a cofactor. The cofactor is [2Fe-2S] cluster.

It carries out the reaction (4R,5S)-dethiobiotin + (sulfur carrier)-SH + 2 reduced [2Fe-2S]-[ferredoxin] + 2 S-adenosyl-L-methionine = (sulfur carrier)-H + biotin + 2 5'-deoxyadenosine + 2 L-methionine + 2 oxidized [2Fe-2S]-[ferredoxin]. Its pathway is cofactor biosynthesis; biotin biosynthesis; biotin from 7,8-diaminononanoate: step 2/2. Catalyzes the conversion of dethiobiotin (DTB) to biotin by the insertion of a sulfur atom into dethiobiotin via a radical-based mechanism. In Rhodopseudomonas palustris (strain BisB5), this protein is Biotin synthase.